The sequence spans 226 residues: Ribonuclease 3 (226 aa).

The 123-residue stretch at 6-128 (INRLQRKLGY…LIGGVFLDSD (123 aa)) folds into the RNase III domain. Glu41 contributes to the Mg(2+) binding site. The active site involves Asp45. The Mg(2+) site is built by Asp114 and Glu117. Glu117 is an active-site residue. The DRBM domain occupies 155–225 (DPKTRLQEYL…AEQALKKLEL (71 aa)).

This sequence belongs to the ribonuclease III family. In terms of assembly, homodimer. It depends on Mg(2+) as a cofactor.

It is found in the cytoplasm. It carries out the reaction Endonucleolytic cleavage to 5'-phosphomonoester.. Digests double-stranded RNA. Involved in the processing of primary rRNA transcript to yield the immediate precursors to the large and small rRNAs (23S and 16S). Processes some mRNAs, and tRNAs when they are encoded in the rRNA operon. Processes pre-crRNA and tracrRNA of type II CRISPR loci if present in the organism. In Klebsiella pneumoniae (strain 342), this protein is Ribonuclease 3.